Here is a 1037-residue protein sequence, read N- to C-terminus: Multidrug resistance protein MdtF (1037 aa).

The Cytoplasmic segment spans residues 1–9 (MANYFIDRP). The chain crosses the membrane as a helical span at residues 10 to 30 (VFAWVLAIIMMLAGGLAIMNL). Residues 31-338 (PVAQYPQIAP…TTPFIKISIQ (308 aa)) are Periplasmic-facing. Residues 339-359 (EVFKTLVEAIILVFLVMYLFL) traverse the membrane as a helical segment. Topologically, residues 360 to 369 (QNFRATIIPT) are cytoplasmic. The helical transmembrane segment at 370–390 (IAVPVVILGTFAILSAVGFTI) threads the bilayer. Residues 391 to 392 (NT) are Periplasmic-facing. A helical transmembrane segment spans residues 393 to 413 (LTMFGMVLAIGLLVDDAIVVV). The Cytoplasmic portion of the chain corresponds to 414-440 (ENVERVIAEDKLPPKEATHKSMGQIQR). Residues 441–461 (ALVGIAVVLSAVFMPMAFMSG) form a helical membrane-spanning segment. Residues 462 to 471 (ATGEIYRQFS) are Periplasmic-facing. Residues 472–492 (ITLISSMLLSVFVAMSLTPAL) traverse the membrane as a helical segment. Topologically, residues 493–534 (CATILKAAPEGGHKPNALFARFNTLFEKSTQHYTDSTRSLLR) are cytoplasmic. The chain crosses the membrane as a helical span at residues 535-555 (CTGRYMVVYLLICAGMAVLFL). At 556–870 (RTPTSFLPEE…SYQEALSSNQ (315 aa)) the chain is on the periplasmic side. Residues 871–891 (APALYAISLVVVFLALAALYE) form a helical membrane-spanning segment. Position 892 (Ser892) is a topological domain, cytoplasmic. The chain crosses the membrane as a helical span at residues 893 to 913 (WSIPFSVMLVVPLGVVGALLA). The Periplasmic portion of the chain corresponds to 914 to 927 (TDLRGLSNDVYFQV). A helical transmembrane segment spans residues 928–948 (GLLTTIGLSAKNAILIVEFAV). Residues 949–972 (EMMQKEGKTPVEAIIEAARMRLRP) are Cytoplasmic-facing. A helical transmembrane segment spans residues 973–993 (ILMTSLAFILGVLPLVISHGA). Residues 994 to 1006 (GSGAQNAVGTGVM) lie on the Periplasmic side of the membrane. Residues 1007-1027 (GGMFAATVLAIYFVPVFFVVV) traverse the membrane as a helical segment. Residues 1028–1037 (EHLFARFKKA) are Cytoplasmic-facing.

This sequence belongs to the resistance-nodulation-cell division (RND) (TC 2.A.6) family. Homotrimer. Part of the tripartite efflux system MdtEF-TolC, which is composed of an inner membrane transporter, MdtF, a membrane fusion protein, MdtE, and an outer membrane component, TolC. The complex forms a large protein conduit and can translocate molecules across both the inner and outer membranes.

It is found in the cell inner membrane. Its function is as follows. Part of the tripartite efflux system MdtEF-TolC, which confers resistance to various compounds. This chain is Multidrug resistance protein MdtF (mdtF), found in Escherichia coli O6:H1 (strain CFT073 / ATCC 700928 / UPEC).